Consider the following 184-residue polypeptide: Cytidylate kinase (184 aa).

8–16 (GQPGSGKTT) contributes to the ATP binding site.

The protein belongs to the cytidylate kinase family. Type 2 subfamily.

Its subcellular location is the cytoplasm. The enzyme catalyses CMP + ATP = CDP + ADP. The catalysed reaction is dCMP + ATP = dCDP + ADP. The polypeptide is Cytidylate kinase (Pyrobaculum arsenaticum (strain DSM 13514 / JCM 11321 / PZ6)).